The following is a 567-amino-acid chain: MPSEKATTRHLPGAVETLSPRTGRRPETPAYGSWLLGRVSESPRMRRVRIQGMLTVAILVTNVIGLIVGAMLLTVAFPKPSVILDAPHWVSFGIVPGYCVLAFILGTYWLTRQTARALRWAIEERTPSHDEARSAFLVPLRVALAVLFLWGAAAALWTIIYGLANRLFIPRFLFSMGVIGVVAATSCYLLTEFALRPMAAQALEVGATPRSLVRGIVGRTMLVWLLCSGVPNVGVALTAIFDDTFWELSNDQFMITVLILWAPLLIFGFILMWILAWLTATPVRVVREALNRVEQGDLSGDLVVFDGTELGELQRGFNRMVEGLRERERVRDLFGRHVGREVAAAAERERPKLGGEERHVAVVFVDIVGSTQLVTSRPAAEVVMLLNRFFTVIVDEVNHHRGLVNKFQGDASLAVFGAPNRLSHPEDAALATARAIADRLASEMPECQAGIGVAAGQVVAGNVGAHERFEYTVIGEPVNEAARLCELAKSYPSRLLASSQTLRGASENECARWSLGETVTLRGHDQPIRLTSPVQQLQMPAQSADIVGGALGDHQTHTIYRGAHPTD.

Residues 1 to 26 (MPSEKATTRHLPGAVETLSPRTGRRP) are disordered. A run of 6 helical transmembrane segments spans residues 57 to 77 (AILV…TVAF), 90 to 110 (VSFG…TYWL), 142 to 162 (VALA…IIYG), 173 to 193 (LFSM…LTEF), 221 to 241 (MLVW…TAIF), and 257 to 277 (VLIL…ILAW). The HAMP domain occupies 278-329 (LTATPVRVVREALNRVEQGDLSGDLVVFDGTELGELQRGFNRMVEGLRERER). The 125-residue stretch at 361–485 (AVVFVDIVGS…EPVNEAARLC (125 aa)) folds into the Guanylate cyclase domain.

This sequence belongs to the adenylyl cyclase class-3 family.

Its subcellular location is the cell membrane. This is an uncharacterized protein from Mycobacterium tuberculosis (strain ATCC 25618 / H37Rv).